A 380-amino-acid chain; its full sequence is Actin-like protein arp10 (380 aa).

Belongs to the actin family. ARP10 subfamily.

Its subcellular location is the cytoplasm. The protein localises to the cytoskeleton. The protein resides in the nucleus. The chain is Actin-like protein arp10 (arp10) from Schizosaccharomyces pombe (strain 972 / ATCC 24843) (Fission yeast).